The chain runs to 138 residues: Acyl carrier protein 1, chloroplastic (138 aa).

The N-terminal 56 residues, 1-56, are a transit peptide targeting the chloroplast; sequence MASLSATTTVRVQPSSSSLHKLSQGNGRCSSIVCLDWGKSSFPTLRTSRRRSFISA. Residues 59-134 enclose the Carrier domain; the sequence is KETIDKVCDI…QAADVIESLL (76 aa). An O-(pantetheine 4'-phosphoryl)serine modification is found at Ser94.

This sequence belongs to the acyl carrier protein (ACP) family. Post-translationally, 4'-phosphopantetheine is transferred from CoA to a specific serine of apo-ACP by acpS. This modification is essential for activity because fatty acids are bound in thioester linkage to the sulfhydryl of the prosthetic group.

Its subcellular location is the plastid. It is found in the chloroplast. It functions in the pathway lipid metabolism; fatty acid biosynthesis. Its function is as follows. Carrier of the growing fatty acid chain in fatty acid biosynthesis. This is Acyl carrier protein 1, chloroplastic (ACL1.1) from Spinacia oleracea (Spinach).